Here is a 95-residue protein sequence, read N- to C-terminus: Co-chaperonin GroES (95 aa).

This sequence belongs to the GroES chaperonin family. In terms of assembly, heptamer of 7 subunits arranged in a ring. Interacts with the chaperonin GroEL.

Its subcellular location is the cytoplasm. In terms of biological role, together with the chaperonin GroEL, plays an essential role in assisting protein folding. The GroEL-GroES system forms a nano-cage that allows encapsulation of the non-native substrate proteins and provides a physical environment optimized to promote and accelerate protein folding. GroES binds to the apical surface of the GroEL ring, thereby capping the opening of the GroEL channel. The polypeptide is Co-chaperonin GroES (Dichelobacter nodosus (strain VCS1703A)).